A 287-amino-acid polypeptide reads, in one-letter code: ATP synthase gamma chain (287 aa).

This sequence belongs to the ATPase gamma chain family. In terms of assembly, F-type ATPases have 2 components, CF(1) - the catalytic core - and CF(0) - the membrane proton channel. CF(1) has five subunits: alpha(3), beta(3), gamma(1), delta(1), epsilon(1). CF(0) has three main subunits: a, b and c.

Its subcellular location is the cell inner membrane. In terms of biological role, produces ATP from ADP in the presence of a proton gradient across the membrane. The gamma chain is believed to be important in regulating ATPase activity and the flow of protons through the CF(0) complex. The polypeptide is ATP synthase gamma chain (Hahella chejuensis (strain KCTC 2396)).